Consider the following 312-residue polypeptide: Olfactory receptor 4F15 (312 aa).

The Extracellular segment spans residues 1–25 (MNGMNHSVVSEFVFMGLTNSREIQL). N5 is a glycosylation site (N-linked (GlcNAc...) asparagine). Residues 26–49 (LLFVFSLLFYFASMMGNLVIVFTV) traverse the membrane as a helical segment. The Cytoplasmic segment spans residues 50-57 (TMDAHLHS). A helical transmembrane segment spans residues 58–79 (PMYFLLANLSIIDMAFCSITAP). Over 80–100 (KMICDIFKKHKAISFRGCITQ) the chain is Extracellular. A disulfide bridge connects residues C97 and C189. A helical membrane pass occupies residues 101–120 (IFFSHALGGTEMVLLIAMAF). The Cytoplasmic segment spans residues 121–139 (DRYMAICKPLHYLTIMSPR). Residues 140–158 (MCLYFLATSSIIGLIHSLV) traverse the membrane as a helical segment. At 159 to 195 (QLVFVVDLPFCGPNIFDSFYCDLPRLLRLACTNTQEL) the chain is on the extracellular side. Residues 196-219 (EFMVTVNSGLISVGSFVLLVISYI) traverse the membrane as a helical segment. The Cytoplasmic portion of the chain corresponds to 220–235 (FILFTVWKHSSGGLAK). Residues 236-258 (ALSTLSAHVTVVILFFGPLMFFY) traverse the membrane as a helical segment. The Extracellular portion of the chain corresponds to 259 to 269 (TWPSPTSHLDK). A helical transmembrane segment spans residues 270 to 289 (YLAIFDAFITPFLNPVIYTF). The Cytoplasmic portion of the chain corresponds to 290 to 312 (RNKDMKVAMRRLCSRLAHFTKIL).

This sequence belongs to the G-protein coupled receptor 1 family.

Its subcellular location is the cell membrane. Functionally, odorant receptor. The protein is Olfactory receptor 4F15 (OR4F15) of Homo sapiens (Human).